The chain runs to 307 residues: UDP-3-O-acyl-N-acetylglucosamine deacetylase (307 aa).

Zn(2+) is bound by residues H78, H235, and D239. The active-site Proton donor is H262.

Belongs to the LpxC family. Requires Zn(2+) as cofactor.

The catalysed reaction is a UDP-3-O-[(3R)-3-hydroxyacyl]-N-acetyl-alpha-D-glucosamine + H2O = a UDP-3-O-[(3R)-3-hydroxyacyl]-alpha-D-glucosamine + acetate. Its pathway is glycolipid biosynthesis; lipid IV(A) biosynthesis; lipid IV(A) from (3R)-3-hydroxytetradecanoyl-[acyl-carrier-protein] and UDP-N-acetyl-alpha-D-glucosamine: step 2/6. Functionally, catalyzes the hydrolysis of UDP-3-O-myristoyl-N-acetylglucosamine to form UDP-3-O-myristoylglucosamine and acetate, the committed step in lipid A biosynthesis. This Geotalea uraniireducens (strain Rf4) (Geobacter uraniireducens) protein is UDP-3-O-acyl-N-acetylglucosamine deacetylase.